A 158-amino-acid chain; its full sequence is Kelch repeat protein B10 (158 aa).

2 Kelch repeats span residues 25-76 (TIFV…STFG) and 77-129 (MLYF…KLNN).

This sequence belongs to the poxviruses Kelch family.

In Vaccinia virus (strain Ankara) (VACV), this protein is Kelch repeat protein B10.